Reading from the N-terminus, the 398-residue chain is MTGGQVKVFGKAIQTLSRVSDELWLDPSEKGLALRSVNSCHSTYGYVLFSSVFFQHYQWSPSATITDSDIPLNLNCKLAIKSILPIFRCLNYLERSIEKCTMVARSDRCRVVIQFFGRHGIKRTHNVYFQDCQPLKILFEKSLCANILMIKPRLLAEAIALLTSNQEEVTFSVTPENFCLKSSSGESLDLTSSVYSEMSFGPEEFDFFQVGLDTEITFCFKELKGILTFSEVMHAPIAIYFDFPGKPVVLSVEDMLLEASFILATLLDYPSRTSSPQSLRLSQARRSDPTLSGAQEGKSRVSQTPESISRAAPKRLFPKDPPDSSSAAETRRASASQDDISEVPESVVSDMEEGQSPSPLRKFSCMFFGAVSCEQQEHANHPLGSLAVASDSEQDASG.

Residues 272–281 (RTSSPQSLRL) are compositionally biased toward polar residues. The disordered stretch occupies residues 272–359 (RTSSPQSLRL…DMEEGQSPSP (88 aa)). Positions 324-336 (SSSAAETRRASAS) are enriched in low complexity. Residues Ser349 and Ser358 each carry the phosphoserine modification.

This sequence belongs to the rad9 family. In terms of assembly, interacts with HUS1, HUS1B, RAD1, RAD9A and RAD17.

This is Cell cycle checkpoint control protein RAD9B (Rad9b) from Rattus norvegicus (Rat).